The primary structure comprises 227 residues: UPF0758 protein Psyc_1834 (227 aa).

Residues 102 to 224 (GLGRSQMVKD…TLSYAENCLA (123 aa)) form the MPN domain. Residues His-173, His-175, and Asp-186 each coordinate Zn(2+). The short motif at 173–186 (HNHPHTDATPSTAD) is the JAMM motif element.

Belongs to the UPF0758 family.

This chain is UPF0758 protein Psyc_1834, found in Psychrobacter arcticus (strain DSM 17307 / VKM B-2377 / 273-4).